Here is a 334-residue protein sequence, read N- to C-terminus: MKKVSRLTEADVTAESAFFMQRRQVLKALGITTAALSLPTAAHADVLSWFKGNDRPKAPAGAPLDFTRPAQYQAKLDLTPEDKVTGYNNFYEFGLDKADPAANAGSLKTNPWTLKIGGEVAKPLTLDHDDLTKKFPLEERIYRMRCVEAWSMVVPWIGFPLHKLLALVEPTSNAKYVAFKTLYAPDIMPGQKDRFIGGGLEYPYVEALRLDEAMHPLTMLTTGVYGKALPPQNGAPVRLTVPWKYGFKGIKSIVSITLTRERPPTTWNMAAPDEYGFYANVNPHVDHPRWSQASERVIGSGGVLDVKRQPTLLFNGYADEVASLYKGLDLRENF.

Positions 1 to 44 (MKKVSRLTEADVTAESAFFMQRRQVLKALGITTAALSLPTAAHA) form a signal peptide, tat-type signal. Residues Asn-88, 91 to 92 (YE), Cys-146, Thr-181, Asn-233, Arg-238, and 249 to 251 (GIK) each bind Mo-molybdopterin.

Belongs to the MsrP family. Heterodimer of a catalytic subunit (MsrP) and a heme-binding subunit (MsrQ). Mo-molybdopterin is required as a cofactor. Predicted to be exported by the Tat system. The position of the signal peptide cleavage has not been experimentally proven.

It is found in the periplasm. It carries out the reaction L-methionyl-[protein] + a quinone + H2O = L-methionyl-(S)-S-oxide-[protein] + a quinol. It catalyses the reaction L-methionyl-[protein] + a quinone + H2O = L-methionyl-(R)-S-oxide-[protein] + a quinol. Part of the MsrPQ system that repairs oxidized periplasmic proteins containing methionine sulfoxide residues (Met-O), using respiratory chain electrons. Thus protects these proteins from oxidative-stress damage caused by reactive species of oxygen and chlorine generated by the host defense mechanisms. MsrPQ is essential for the maintenance of envelope integrity under bleach stress, rescuing a wide series of structurally unrelated periplasmic proteins from methionine oxidation. The catalytic subunit MsrP is non-stereospecific, being able to reduce both (R-) and (S-) diastereoisomers of methionine sulfoxide. The polypeptide is Protein-methionine-sulfoxide reductase catalytic subunit MsrP (Cronobacter sakazakii (strain ATCC BAA-894) (Enterobacter sakazakii)).